A 429-amino-acid chain; its full sequence is MNYMSVSFTHKNTDIIVREKLSFANDVKKREILKLICSNKAIKECLVLSTCNRVEVLAYIDDFNYTSDYVIKAISKLSGVDFDELKERADIYEDDGAIHHLFSVASSLDSLVVGETQIVGQLKDAYNFAKNERKSGVMLDLAINSALKCAAVIRSKTDISKNPISVASVAVCMAREKIGDLGGTTAVVVGAGEMAELACKHLITHKAKVIIINRNIDHAKKLAESLGENASIAEFSNLGEFINKYALIFSATGANKPIITDLLAKPQNFKRYFFDIAVPRDIDITCDDLSEVYAVDDLEEIVRKNLLLREEQAQIAYSIVGRETTKFYKDLKTLSSTPIIKALRNSAKKVAETELKKAIKRGYLRHSDIDEARKLIHQVFKAFLHTPTVNLKNLDENAQNDINAIAEIFGIEEDFDKFCENSLENKNEI.

Residues 50-53 (TCNR), serine 110, 115-117 (ETQ), and glutamine 121 each bind substrate. Cysteine 51 functions as the Nucleophile in the catalytic mechanism. Residue 190-195 (GAGEMA) participates in NADP(+) binding.

The protein belongs to the glutamyl-tRNA reductase family. In terms of assembly, homodimer.

It catalyses the reaction (S)-4-amino-5-oxopentanoate + tRNA(Glu) + NADP(+) = L-glutamyl-tRNA(Glu) + NADPH + H(+). It participates in porphyrin-containing compound metabolism; protoporphyrin-IX biosynthesis; 5-aminolevulinate from L-glutamyl-tRNA(Glu): step 1/2. Functionally, catalyzes the NADPH-dependent reduction of glutamyl-tRNA(Glu) to glutamate 1-semialdehyde (GSA). In Campylobacter hominis (strain ATCC BAA-381 / DSM 21671 / CCUG 45161 / LMG 19568 / NCTC 13146 / CH001A), this protein is Glutamyl-tRNA reductase.